We begin with the raw amino-acid sequence, 616 residues long: Dihydroxy-acid dehydratase (616 aa).

Asp-81 is a Mg(2+) binding site. Residue Cys-122 participates in [2Fe-2S] cluster binding. Mg(2+)-binding residues include Asp-123 and Lys-124. An N6-carboxylysine modification is found at Lys-124. A [2Fe-2S] cluster-binding site is contributed by Cys-195. Glu-491 contacts Mg(2+). Ser-517 serves as the catalytic Proton acceptor.

The protein belongs to the IlvD/Edd family. Homodimer. It depends on [2Fe-2S] cluster as a cofactor. Mg(2+) serves as cofactor.

It catalyses the reaction (2R)-2,3-dihydroxy-3-methylbutanoate = 3-methyl-2-oxobutanoate + H2O. The enzyme catalyses (2R,3R)-2,3-dihydroxy-3-methylpentanoate = (S)-3-methyl-2-oxopentanoate + H2O. Its pathway is amino-acid biosynthesis; L-isoleucine biosynthesis; L-isoleucine from 2-oxobutanoate: step 3/4. The protein operates within amino-acid biosynthesis; L-valine biosynthesis; L-valine from pyruvate: step 3/4. Its function is as follows. Functions in the biosynthesis of branched-chain amino acids. Catalyzes the dehydration of (2R,3R)-2,3-dihydroxy-3-methylpentanoate (2,3-dihydroxy-3-methylvalerate) into 2-oxo-3-methylpentanoate (2-oxo-3-methylvalerate) and of (2R)-2,3-dihydroxy-3-methylbutanoate (2,3-dihydroxyisovalerate) into 2-oxo-3-methylbutanoate (2-oxoisovalerate), the penultimate precursor to L-isoleucine and L-valine, respectively. The sequence is that of Dihydroxy-acid dehydratase from Yersinia enterocolitica serotype O:8 / biotype 1B (strain NCTC 13174 / 8081).